A 644-amino-acid chain; its full sequence is Transcription factor btd (644 aa).

2 disordered regions span residues 16 to 65 and 101 to 196; these read HQAQ…TQQQ and APPS…AGSP. 2 stretches are compositionally biased toward low complexity: residues 101 to 119 and 140 to 196; these read APPS…SSPL and ASPN…AGSP. 3 C2H2-type zinc fingers span residues 333 to 357, 363 to 385, and 391 to 413; these read HICH…LRWH, FLCL…GRTH, and YACP…KKTH. 2 disordered regions span residues 437–461 and 478–537; these read LEKK…QPDT and TSAG…SSSA. Low complexity-rich tracts occupy residues 499–508 and 521–537; these read TTTTSSAAAS and AIQP…SSSA.

The protein localises to the nucleus. In terms of biological role, required for the development of the antennal, intercalary and mandibular segments of the head. This chain is Transcription factor btd (btd), found in Drosophila melanogaster (Fruit fly).